We begin with the raw amino-acid sequence, 340 residues long: Phosphate acyltransferase (340 aa).

A disordered region spans residues 285 to 340 (WRQSGRPARHRGQEPRRHRQPRFWLCHRRGRRRSPRQRNRTHPGTGQPPAGCAGAR). The segment covering 300 to 325 (RRHRQPRFWLCHRRGRRRSPRQRNRT) has biased composition (basic residues).

Belongs to the PlsX family. Homodimer. Probably interacts with PlsY.

It localises to the cytoplasm. It catalyses the reaction a fatty acyl-[ACP] + phosphate = an acyl phosphate + holo-[ACP]. It participates in lipid metabolism; phospholipid metabolism. Functionally, catalyzes the reversible formation of acyl-phosphate (acyl-PO(4)) from acyl-[acyl-carrier-protein] (acyl-ACP). This enzyme utilizes acyl-ACP as fatty acyl donor, but not acyl-CoA. This Laribacter hongkongensis (strain HLHK9) protein is Phosphate acyltransferase.